The primary structure comprises 683 residues: Putative boron transporter 5 (683 aa).

The Cytoplasmic portion of the chain corresponds to 1–38 (MEEERVEGSKRPFQGIIRDVKGRALCYKQDWIAGLRSG). A helical membrane pass occupies residues 39 to 59 (FGILAPTTYVFFASALPVIAF). The Extracellular portion of the chain corresponds to 60 to 80 (GEQLSHDTERSLSTVETLAST). A helical transmembrane segment spans residues 81–101 (ALCGVIHSLLGGQPLLILGVA). Residues 102 to 126 (EPTVLMYKYLYDFAKGRPELGKQLY) lie on the Cytoplasmic side of the membrane. A helical transmembrane segment spans residues 127 to 147 (LAWVAWVCVWTALLLFLMAIF). Residues 148–158 (NMAYIINRFTR) lie on the Extracellular side of the membrane. The helical transmembrane segment at 159 to 179 (IAGELFGMLIAVLFLQQTIKG) threads the bilayer. The Cytoplasmic segment spans residues 180–200 (MVSEFRIPKGEDSKLEKYQFE). Residues 201-221 (WLYTNGLLGLIFTVGLVYTAL) traverse the membrane as a helical segment. Residues 222 to 238 (KSRKARSWPYGTGCCRS) are Extracellular-facing. Residues 239–259 (FVADYGVPLMVVVWTALSFST) traverse the membrane as a helical segment. Over 260 to 294 (PSKLPSGVPRRLVSPLPWDSVSLTHWTVIKDMGKV) the chain is Cytoplasmic. A helical transmembrane segment spans residues 295–315 (SPGYIFAAFIPALMIAGLYFF). Over 316 to 335 (DHSVVSQLAQQKEFNLKNPS) the chain is Extracellular. A helical membrane pass occupies residues 336 to 356 (AYHYDILLLGFMVLICGMLGL). At 357–477 (PPSNGVLPQS…EQRVSNLLQS (121 aa)) the chain is on the cytoplasmic side. The helical transmembrane segment at 478 to 498 (LLVIGAVFALPVIKLIPTSLL) threads the bilayer. At 499 to 565 (WGYFAYMAID…QILYFGLCYG (67 aa)) the chain is on the extracellular side. The helical transmembrane segment at 566–586 (VTWIPVAGIMFPVLFFLLVAI) threads the bilayer. At 587–683 (RQYLLPKLFK…GDGDMSSSRE (97 aa)) the chain is on the cytoplasmic side.

This sequence belongs to the anion exchanger (TC 2.A.31.3) family.

The protein localises to the membrane. Functionally, putative boron transporter. Boron is essential for maintaining the integrity of plants cell walls. The protein is Putative boron transporter 5 (BOR5) of Arabidopsis thaliana (Mouse-ear cress).